The sequence spans 199 residues: Ribosome maturation factor RimP (199 aa).

The segment at 165 to 199 (AGNLPPQPEDDEDMLADFEIDESEDEEDPETGDVQ) is disordered. Acidic residues predominate over residues 172 to 199 (PEDDEDMLADFEIDESEDEEDPETGDVQ).

Belongs to the RimP family.

The protein localises to the cytoplasm. Its function is as follows. Required for maturation of 30S ribosomal subunits. The protein is Ribosome maturation factor RimP of Hyphomonas neptunium (strain ATCC 15444).